The primary structure comprises 63 residues: DNA gyrase inhibitor YacG (63 aa).

Cys-9, Cys-12, Cys-28, and Cys-32 together coordinate Zn(2+).

It belongs to the DNA gyrase inhibitor YacG family. As to quaternary structure, interacts with GyrB. It depends on Zn(2+) as a cofactor.

Functionally, inhibits all the catalytic activities of DNA gyrase by preventing its interaction with DNA. Acts by binding directly to the C-terminal domain of GyrB, which probably disrupts DNA binding by the gyrase. The chain is DNA gyrase inhibitor YacG from Salmonella choleraesuis (strain SC-B67).